The following is a 578-amino-acid chain: G protein-coupled receptor kinase 4 (578 aa).

M1 bears the N-acetylmethionine mark. Residues 1 to 154 (MELENIVANS…ECTRVAHNYL (154 aa)) form an N-terminal region. The 121-residue stretch at 52 to 172 (DYSSLCDKQP…QESSYFSQFL (121 aa)) folds into the RGS domain. The Protein kinase domain maps to 187–449 (FRHYRVLGKG…AAGVKQHPVF (263 aa)). Residues 193 to 201 (LGKGGFGEV) and K216 each bind ATP. Residue D312 is the Proton acceptor of the active site. Positions 450-515 (KDINFRRLEA…GCVSIPWQNE (66 aa)) constitute an AGC-kinase C-terminal domain. S485 carries the post-translational modification Phosphoserine.

This sequence belongs to the protein kinase superfamily. AGC Ser/Thr protein kinase family. GPRK subfamily. As to quaternary structure, interacts with DRD3. Post-translationally, palmitoylated. As to expression, isoform 1, isoform 2, isoform 3, and isoform 4 are expressed in testis. Isoform 4 is expressed in myometrium.

The protein localises to the cytoplasm. The protein resides in the cell cortex. The enzyme catalyses [G-protein-coupled receptor] + ATP = [G-protein-coupled receptor]-phosphate + ADP + H(+). With respect to regulation, inhibited by heparin. Functionally, specifically phosphorylates the activated forms of G protein-coupled receptors. GRK4-alpha can phosphorylate rhodopsin and its activity is inhibited by calmodulin; the other three isoforms do not phosphorylate rhodopsin and do not interact with calmodulin. GRK4-alpha and GRK4-gamma phosphorylate DRD3. Phosphorylates ADRB2. This is G protein-coupled receptor kinase 4 (GRK4) from Homo sapiens (Human).